Consider the following 55-residue polypeptide: Large ribosomal subunit protein bL33A (55 aa).

Belongs to the bacterial ribosomal protein bL33 family.

The polypeptide is Large ribosomal subunit protein bL33A (Mycobacterium ulcerans (strain Agy99)).